The primary structure comprises 229 residues: Ribonuclease HII (229 aa).

The RNase H type-2 domain occupies 42–229; it reads TRIAGVDEVG…KPVHKILYQE (188 aa). Aspartate 48, glutamate 49, and aspartate 139 together coordinate a divalent metal cation.

Belongs to the RNase HII family. Requires Mn(2+) as cofactor. Mg(2+) is required as a cofactor.

The protein resides in the cytoplasm. It catalyses the reaction Endonucleolytic cleavage to 5'-phosphomonoester.. Endonuclease that specifically degrades the RNA of RNA-DNA hybrids. The sequence is that of Ribonuclease HII from Ruegeria sp. (strain TM1040) (Silicibacter sp.).